The chain runs to 394 residues: Protein BUR2 (394 aa).

2 disordered regions span residues 1-32 and 372-394; these read MVLS…GNPQ and MSER…KPRF. Residues 9–32 show a composition bias toward polar residues; the sequence is IANSQPSGNGKTSLDIKQNEGNPQ. Positions 372-381 are enriched in basic and acidic residues; sequence MSERSIKRPS.

As to quaternary structure, belongs to the BUR kinase complex.

The protein resides in the nucleus. Component of the BUR kinase complex involved in transcription regulation. This complex phosphorylates the UBC2/RAD6 ubiquitin-conjugating enzyme (E2), leading to monoubiquitination of histone H2B and the silencing of telomeric-associated genes. Also required for histone H3 methylation. Necessary for the recovery from pheromone-induced growth arrest in the cell cycle G1 phase. The kinase activity of the complex requires the presence of BUR2. Overexpression of BUR2 interferes with mitotic chromosome segregation. The chain is Protein BUR2 (BUR2) from Kluyveromyces lactis (strain ATCC 8585 / CBS 2359 / DSM 70799 / NBRC 1267 / NRRL Y-1140 / WM37) (Yeast).